The following is a 561-amino-acid chain: AT-rich interactive domain-containing protein 3B (561 aa).

Met-1 carries the N-acetylmethionine modification. Residues 1–17 are compositionally biased toward low complexity; that stretch reads MEPLQQQQQQQQQQQKQ. Disordered stretches follow at residues 1–36, 53–122, and 136–179; these read MEPL…QQMR, LSAT…SKYF, and PMSN…WNLD. A Phosphoserine modification is found at Ser-89. The span at 90 to 109 shows a compositional bias: acidic residues; it reads EPEEEDGGLEDEDGDDEVAE. Basic and acidic residues predominate over residues 152–162; that stretch reads QAKEDHTKDAS. The segment covering 164–178 has biased composition (polar residues); sequence ASPSVSTAGQPNWNL. Ser-165 bears the Phosphoserine mark. Residues 203-365 are interaction with RB1; that stretch reads SRDFAKLYEL…SPPKIRFPIL (163 aa). An ARID domain is found at 215–307; sequence DPERKEFLDD…YLYAYECEKK (93 aa). Ser-311 carries the post-translational modification Phosphoserine. At Arg-361 the chain carries Asymmetric dimethylarginine. A disordered region spans residues 370–397; it reads SSGTNTSSPRISPATTLRKGDGAPVTTV. The REKLES domain maps to 419–517; the sequence is AALEQLRERL…GVLFAQKPVV (99 aa). An interaction with ARID3A region spans residues 490–513; that stretch reads SSIGSINMSVDIDGTTYAGVLFAQ. The span at 523–552 shows a compositional bias: low complexity; sequence SAPQSLGSSASSSSSSHCSPSPTSSRGTPS. Positions 523–561 are disordered; it reads SAPQSLGSSASSSSSSHCSPSPTSSRGTPSAEPSTSWSL.

Heterodimer with ARID3A. Interacts with unphosphorylated RB1. In terms of tissue distribution, expressed in placenta, testis and leukocytes. Expressed in neuroblastoma. Present in K-562 erythrocytic leukemia cell line (at protein level).

The protein localises to the nucleus. Functionally, transcription factor which may be involved in neuroblastoma growth and malignant transformation. Favors nuclear targeting of ARID3A. This chain is AT-rich interactive domain-containing protein 3B (ARID3B), found in Homo sapiens (Human).